A 393-amino-acid polypeptide reads, in one-letter code: Phospholipase A1-II 1 (393 aa).

Residues 200-220 (QVLNEIKRLQDMYEHEETSIT) are a coiled coil. Catalysis depends on Ser225, which acts as the Acyl-ester intermediate. Active-site charge relay system residues include Ser225, Asp284, and His321.

It belongs to the AB hydrolase superfamily. Lipase family.

It localises to the cytoplasm. Its function is as follows. Acylhydrolase that catalyzes the hydrolysis of phospholipids at the sn-1 position. This is Phospholipase A1-II 1 from Oryza sativa subsp. indica (Rice).